The chain runs to 1011 residues: Antigenic heat-stable 120 kDa protein (1011 aa).

3 disordered regions span residues 1–37, 54–73, and 348–396; these read DTSE…TPAL, TPSM…TSDP, and GQSK…PQSQ. The span at 12–27 shows a compositional bias: basic and acidic residues; that stretch reads EYTEEQKQTEEQEQKE. 2 stretches are compositionally biased toward polar residues: residues 348 to 373 and 380 to 396; these read GQSK…QYKQ and PTNQ…PQSQ.

The protein localises to the cytoplasm. This is Antigenic heat-stable 120 kDa protein (sca4) from Rickettsia sibirica subsp. mongolitimonae (Rickettsia mongolotimonae).